The primary structure comprises 283 residues: tRNA-cytidine(32) 2-sulfurtransferase (283 aa).

Positions 37-42 (SGGKDS) match the PP-loop motif motif. [4Fe-4S] cluster-binding residues include Cys112, Cys115, and Cys203.

This sequence belongs to the TtcA family. Homodimer. Requires Mg(2+) as cofactor. It depends on [4Fe-4S] cluster as a cofactor.

The protein localises to the cytoplasm. It carries out the reaction cytidine(32) in tRNA + S-sulfanyl-L-cysteinyl-[cysteine desulfurase] + AH2 + ATP = 2-thiocytidine(32) in tRNA + L-cysteinyl-[cysteine desulfurase] + A + AMP + diphosphate + H(+). Its pathway is tRNA modification. Its function is as follows. Catalyzes the ATP-dependent 2-thiolation of cytidine in position 32 of tRNA, to form 2-thiocytidine (s(2)C32). The sulfur atoms are provided by the cysteine/cysteine desulfurase (IscS) system. This chain is tRNA-cytidine(32) 2-sulfurtransferase, found in Legionella pneumophila subsp. pneumophila (strain Philadelphia 1 / ATCC 33152 / DSM 7513).